Reading from the N-terminus, the 733-residue chain is Polyribonucleotide nucleotidyltransferase (733 aa).

Residues D489 and D495 each contribute to the Mg(2+) site. The 60-residue stretch at 556–615 (PKIDTIKIDVDKIKIVIGKGGETIDKIIAETGVKIDIDEEGNVSIYSSDQDAINRAKEII) folds into the KH domain. An S1 motif domain is found at 625 to 693 (DEVYHAKVVR…AKGRVDASMK (69 aa)). The interval 691 to 733 (SMKVLLPRPPKSDKPKHHHDKGHHPHKEYKGHKDHQESPKTEE) is disordered. The span at 704–723 (KPKHHHDKGHHPHKEYKGHK) shows a compositional bias: basic residues. Positions 724 to 733 (DHQESPKTEE) are enriched in basic and acidic residues.

This sequence belongs to the polyribonucleotide nucleotidyltransferase family. Mg(2+) serves as cofactor.

The protein localises to the cytoplasm. It catalyses the reaction RNA(n+1) + phosphate = RNA(n) + a ribonucleoside 5'-diphosphate. Functionally, involved in mRNA degradation. Catalyzes the phosphorolysis of single-stranded polyribonucleotides processively in the 3'- to 5'-direction. The protein is Polyribonucleotide nucleotidyltransferase of Streptococcus sanguinis (strain SK36).